The following is a 688-amino-acid chain: Glycine--tRNA ligase beta subunit (688 aa).

The protein belongs to the class-II aminoacyl-tRNA synthetase family. In terms of assembly, tetramer of two alpha and two beta subunits.

It is found in the cytoplasm. It carries out the reaction tRNA(Gly) + glycine + ATP = glycyl-tRNA(Gly) + AMP + diphosphate. In Haemophilus influenzae (strain ATCC 51907 / DSM 11121 / KW20 / Rd), this protein is Glycine--tRNA ligase beta subunit (glyS).